The chain runs to 215 residues: Cytochrome b6 (215 aa).

Residues 32–52 traverse the membrane as a helical segment; sequence IFYCLGGITLVCFLIQFATGF. C35 contacts heme c. Heme b contacts are provided by H86 and H100. 3 helical membrane passes run 90-110, 116-136, and 186-206; these read ASMM…TGGF, LTWV…VTGY, and AHTF…FLMI. Residues H187 and H202 each coordinate heme b.

Belongs to the cytochrome b family. PetB subfamily. The 4 large subunits of the cytochrome b6-f complex are cytochrome b6, subunit IV (17 kDa polypeptide, PetD), cytochrome f and the Rieske protein, while the 4 small subunits are PetG, PetL, PetM and PetN. The complex functions as a dimer. The cofactor is heme b. It depends on heme c as a cofactor.

The protein localises to the cellular thylakoid membrane. Functionally, component of the cytochrome b6-f complex, which mediates electron transfer between photosystem II (PSII) and photosystem I (PSI), cyclic electron flow around PSI, and state transitions. In Trichormus variabilis (strain ATCC 29413 / PCC 7937) (Anabaena variabilis), this protein is Cytochrome b6.